Here is a 134-residue protein sequence, read N- to C-terminus: MKDWLDEIHWNADGLVPAIAQDHETGRVLMMAWMNREALALTASENRAIYWSRSRGKLWRKGEESGHVQKLHELRLDCDADVVILMVEQVGGIACHTGRESCFYRVYENGDWKVVDPVLKDPDAIYEHAGHQHE.

Asp77 contributes to the Mg(2+) binding site. Cys78 contributes to the Zn(2+) binding site. Mg(2+) contacts are provided by Asp79 and Asp81. Cys95 and Cys102 together coordinate Zn(2+).

This sequence belongs to the PRA-CH family. Homodimer. Requires Mg(2+) as cofactor. Zn(2+) serves as cofactor.

The protein resides in the cytoplasm. The enzyme catalyses 1-(5-phospho-beta-D-ribosyl)-5'-AMP + H2O = 1-(5-phospho-beta-D-ribosyl)-5-[(5-phospho-beta-D-ribosylamino)methylideneamino]imidazole-4-carboxamide. Its pathway is amino-acid biosynthesis; L-histidine biosynthesis; L-histidine from 5-phospho-alpha-D-ribose 1-diphosphate: step 3/9. In terms of biological role, catalyzes the hydrolysis of the adenine ring of phosphoribosyl-AMP. This Pseudomonas paraeruginosa (strain DSM 24068 / PA7) (Pseudomonas aeruginosa (strain PA7)) protein is Phosphoribosyl-AMP cyclohydrolase.